We begin with the raw amino-acid sequence, 293 residues long: Bifunctional protein FolD 1 (293 aa).

NADP(+)-binding positions include 174 to 176 (GRS) and Thr-240.

Belongs to the tetrahydrofolate dehydrogenase/cyclohydrolase family. In terms of assembly, homodimer.

The enzyme catalyses (6R)-5,10-methylene-5,6,7,8-tetrahydrofolate + NADP(+) = (6R)-5,10-methenyltetrahydrofolate + NADPH. It carries out the reaction (6R)-5,10-methenyltetrahydrofolate + H2O = (6R)-10-formyltetrahydrofolate + H(+). Its pathway is one-carbon metabolism; tetrahydrofolate interconversion. Functionally, catalyzes the oxidation of 5,10-methylenetetrahydrofolate to 5,10-methenyltetrahydrofolate and then the hydrolysis of 5,10-methenyltetrahydrofolate to 10-formyltetrahydrofolate. This Saccharopolyspora erythraea (strain ATCC 11635 / DSM 40517 / JCM 4748 / NBRC 13426 / NCIMB 8594 / NRRL 2338) protein is Bifunctional protein FolD 1.